Reading from the N-terminus, the 188-residue chain is NAD(P)H-quinone oxidoreductase subunit J (188 aa).

Belongs to the complex I 30 kDa subunit family. NDH-1 can be composed of about 15 different subunits; different subcomplexes with different compositions have been identified which probably have different functions.

It localises to the cellular thylakoid membrane. The catalysed reaction is a plastoquinone + NADH + (n+1) H(+)(in) = a plastoquinol + NAD(+) + n H(+)(out). It catalyses the reaction a plastoquinone + NADPH + (n+1) H(+)(in) = a plastoquinol + NADP(+) + n H(+)(out). Functionally, NDH-1 shuttles electrons from an unknown electron donor, via FMN and iron-sulfur (Fe-S) centers, to quinones in the respiratory and/or the photosynthetic chain. The immediate electron acceptor for the enzyme in this species is believed to be plastoquinone. Couples the redox reaction to proton translocation, and thus conserves the redox energy in a proton gradient. Cyanobacterial NDH-1 also plays a role in inorganic carbon-concentration. This Parasynechococcus marenigrum (strain WH8102) protein is NAD(P)H-quinone oxidoreductase subunit J.